A 152-amino-acid polypeptide reads, in one-letter code: Ninjurin-1 (152 aa).

Met1 bears the N-acetylmethionine mark. Residues 1 to 10 (MDPGTEEYEL) show a composition bias toward acidic residues. Positions 1 to 30 (MDPGTEEYELNGDLRPGSPGSPDASPPRWG) are disordered. The Extracellular portion of the chain corresponds to 1–78 (MDPGTEEYEL…EQGNEFAFFV (78 aa)). The segment covering 16 to 27 (PGSPGSPDASPP) has biased composition (low complexity). Residues Ser18, Ser21, and Ser25 each carry the phosphoserine modification. The interval 26-37 (PPRWGLRNRPIN) is N-terminal adhesion motif. The required to induce plasma membrane rupture stretch occupies residues 40–69 (HYANKKSAAESMLDIALLMANASQLKAVVE). The tract at residues 44–55 (KKSAAESMLDIA) is helix alpha1. The interval 58–74 (MANASQLKAVVEQGNEF) is helix alpha2. Asn60 carries N-linked (GlcNAc...) asparagine glycosylation. Residues 79-103 (PLVVLISISLVLQIGVGVLLIFLVK) form a helical membrane-spanning segment. At 104–113 (YDLNNPAKHA) the chain is on the cytoplasmic side. The helical transmembrane segment at 114-138 (KLDFLNNLATGLVFIIVVVNIFITA) threads the bilayer. The Extracellular portion of the chain corresponds to 139–152 (FGVQKPVMDVAPRQ).

It belongs to the ninjurin family. As to quaternary structure, homodimer; in absence of death stimuli, forms an inactive homodimer. Homooligomer; in response to death stimuli, homooligomerizes into long, highly branched filaments and large, ring-shaped structures in the membrane. The topology shown in the entry corresponds to the activated form. Post-translationally, cleaved by MMP9 protease to generate the Secreted ninjurin-1 form. In terms of processing, N-linked glycosylation is required for homooligomerization.

The protein localises to the cell membrane. It localises to the synaptic cell membrane. Its subcellular location is the secreted. Its activity is regulated as follows. In response to death stimuli, homooligomerizes and disrupts membrane integrity by introducing the hydrophilic faces of alpha1 and alpha2 helices into the hydrophobic membrane. Homooligomerization and ability to mediate plasma membrane rupture is inhibited by glycine; it is unclear whether glycine directly or indirectly inhibits homooligomerization. In normal conditions, NINJ1 is autoinhibited via formation of a homodimer: in the inactive homodimer, the alpha1 and alpha2 helices (residues 44-74) form a single transmembrane region without a kink, in which hydrophilic faces of alpha1 and alpha2 helices are sequestered. Functionally, effector of various programmed cell death, such as pyroptosis and necroptosis, which mediates plasma membrane rupture (cytolysis). Oligomerizes in response to death stimuli and forms ring-like structures on the plasma membrane: acts by cutting and shedding membrane disks, like a cookie cutter, leading to membrane damage and loss that cannot be repaired by the cell. Plasma membrane rupture leads to release intracellular molecules named damage-associated molecular patterns (DAMPs) that propagate the inflammatory response. Mechanistically, mediates plasma membrane rupture by introducing hydrophilic faces of 2 alpha helices into the hydrophobic membrane. Induces plasma membrane rupture downstream of Gasdermin (GSDMA, GSDMB, GSDMC, GSDMD, or GSDME) or MLKL during pyroptosis or necroptosis, respectively. Acts as an effector of PANoptosis downstream of CASP1, CASP4, CASP8 and RIPK3. Also induces plasma membrane rupture in response to cell swelling caused by osmotic stress and ferroptosis downstream of lipid peroxidation. Acts as a regulator of Toll-like receptor 4 (TLR4) signaling triggered by lipopolysaccharide (LPS) during systemic inflammation; directly binds LPS. Involved in leukocyte migration during inflammation by promoting transendothelial migration of macrophages via homotypic binding. Promotes the migration of monocytes across the brain endothelium to central nervous system inflammatory lesions. Also acts as a homophilic transmembrane adhesion molecule involved in various processes such as axonal growth, cell chemotaxis and angiogenesis. Promotes cell adhesion by mediating homophilic interactions via its extracellular N-terminal adhesion motif (N-NAM). Involved in the progression of the inflammatory stress by promoting cell-to-cell interactions between immune cells and endothelial cells. Plays a role in nerve regeneration by promoting maturation of Schwann cells. Acts as a regulator of angiogenesis. Promotes the formation of new vessels by mediating the interaction between capillary pericyte cells and endothelial cells. Promotes osteoclasts development by enhancing the survival of prefusion osteoclasts. Also involved in striated muscle growth and differentiation. In terms of biological role, secreted form generated by cleavage, which has chemotactic activity. Acts as an anti-inflammatory mediator by promoting monocyte recruitment, thereby ameliorating atherosclerosis. The polypeptide is Ninjurin-1 (Rattus norvegicus (Rat)).